A 256-amino-acid polypeptide reads, in one-letter code: UPF0246 protein Sbal_1048 (256 aa).

Belongs to the UPF0246 family.

This chain is UPF0246 protein Sbal_1048, found in Shewanella baltica (strain OS155 / ATCC BAA-1091).